The sequence spans 174 residues: Phospholipase A2-like protein Y52B11A.8 (174 aa).

The N-terminal stretch at 1-18 is a signal peptide; it reads MRGLLVATWIFVSVAASA. N-linked (GlcNAc...) asparagine glycosylation is found at Asn-49 and Asn-143. The segment at 137–174 is disordered; that stretch reads YEASGPNASTTEESPAEKDDYDYESHVAGLNATPSSST.

This sequence belongs to the phospholipase A2 family.

The protein resides in the secreted. The sequence is that of Phospholipase A2-like protein Y52B11A.8 from Caenorhabditis elegans.